A 247-amino-acid chain; its full sequence is Probable membrane transporter protein y4hK (247 aa).

Helical transmembrane passes span 5 to 25 (AIGLAIAFFVIALAYAAVGQA), 31 to 51 (IAAMALSGFSPLAIKPTALAL), 74 to 94 (VYPFAILGFPASALGGSVHLP), 121 to 141 (SALVITIPKTPPLHAALITGA), 202 to 222 (FLPWWLIAVAAGGSIGALIGS), and 227 to 247 (ASWLRVILSVLLMVSGLKLLW).

This sequence belongs to the 4-toluene sulfonate uptake permease (TSUP) (TC 2.A.102) family.

It localises to the cell membrane. The sequence is that of Probable membrane transporter protein y4hK from Sinorhizobium fredii (strain NBRC 101917 / NGR234).